The primary structure comprises 1039 residues: Kinesin-like protein KIN-5B (1039 aa).

In terms of domain architecture, Kinesin motor spans 48-390 (NVQVILRCKP…LDYAYRAKNI (343 aa)). 134-141 (GQTGTGKT) provides a ligand contact to ATP. Residues 1008-1039 (TLSEEHTSLEKISTKQGLGEANNRTPFLEVNK) form a disordered region. Residues 1010 to 1020 (SEEHTSLEKIS) show a composition bias toward basic and acidic residues.

Belongs to the TRAFAC class myosin-kinesin ATPase superfamily. Kinesin family. KIN-5/BimC subfamily.

Its subcellular location is the cytoplasm. The protein resides in the cytoskeleton. The protein localises to the spindle. Functionally, responsible for microtubule translocation. May be important for the organization of phragmoplast-specific arrays of microtubules. Plays an essential role in stabilizing the mitotic spindle. Required during mitotic cytokinesis. The protein is Kinesin-like protein KIN-5B of Arabidopsis thaliana (Mouse-ear cress).